Consider the following 561-residue polypeptide: MKRYTIGIDYGTESGRAVLVDLENGAEVAEHVTPYAHGVIDQCLPDSGRSLEPEWALQHPGDYLDVLRLSVPKVVEIADISASQVIGIGIDFTACTMLPIDKHGDPLCFDPQLAGRPHSWVKLWKHHAAQDEADEINRIAEERKEAFLARYGGKYSSEWMVSKIWQIFNEDPDMFEKADAFLEATDWVVAQLTGTIVRNSCTAGYKAMWHKRDGYPDDSFFAALDPGLAQLTTTKLRGDILAPGQRAGGLTAEMAETLGLKPGTAVAVGNVDAHVAVPAAGVVTPGKMVMVMGTSICHLVLAKEEREVEGMCGVVEDGIVPGYFGYEAGQSAVGDIFAWLMKHGIPADLKQEAEQAGKPLHSLLEEKAAAYRPGETGLLALDWWNGNRSTLVDANLTGLILGYTLQTKAEELYRTLLEATAFGTKKIIDAFRDSGVEVNVLYACGGLPQKNELLMQIYADVTNLEIKVAASKQTPALGAAMYASVAAGDEAGGYETIFAAAEKMAHTKARSFKPNHENVRLYQALYEEYSKLHDYFGRGENDVMKTLKQLRSRAKGGAVHA.

It belongs to the ribulokinase family.

It catalyses the reaction D-ribulose + ATP = D-ribulose 5-phosphate + ADP + H(+). The enzyme catalyses L-ribulose + ATP = L-ribulose 5-phosphate + ADP + H(+). Its pathway is carbohydrate degradation; L-arabinose degradation via L-ribulose; D-xylulose 5-phosphate from L-arabinose (bacterial route): step 2/3. The chain is Ribulokinase from Shouchella clausii (strain KSM-K16) (Alkalihalobacillus clausii).